Here is a 256-residue protein sequence, read N- to C-terminus: DNA repair protein RecO (256 aa).

It belongs to the RecO family.

Functionally, involved in DNA repair and RecF pathway recombination. In Rhizobium johnstonii (strain DSM 114642 / LMG 32736 / 3841) (Rhizobium leguminosarum bv. viciae), this protein is DNA repair protein RecO.